We begin with the raw amino-acid sequence, 236 residues long: Transcriptional regulatory protein RprY (236 aa).

Positions arginine 9–leucine 123 constitute a Response regulatory domain. The residue at position 58 (aspartate 58) is a 4-aspartylphosphate. The segment at residues serine 134 to threonine 231 is a DNA-binding region (ompR/PhoB-type).

Post-translationally, phosphorylated by RprX.

Its subcellular location is the cytoplasm. In terms of biological role, member of the two-component regulatory system RprX/RprY. In Bacteroides fragilis (strain YCH46), this protein is Transcriptional regulatory protein RprY (rprY).